The following is a 630-amino-acid chain: Conserved oligomeric Golgi complex subunit 6 (630 aa).

It belongs to the COG6 family. In terms of assembly, component of the conserved oligomeric Golgi complex which is composed of eight different subunits and is required for normal Golgi morphology and localization.

It localises to the golgi apparatus membrane. Its function is as follows. Required for normal Golgi function. In Drosophila melanogaster (Fruit fly), this protein is Conserved oligomeric Golgi complex subunit 6.